Here is a 215-residue protein sequence, read N- to C-terminus: Glutathione S-transferase D2 (215 aa).

Residues 1–80 (MDFYYMPGGG…YLVEKYGKDD (80 aa)) form the GST N-terminal domain. Glutathione is bound by residues 50–52 (HTI) and 64–66 (ESR). In terms of domain architecture, GST C-terminal spans 86 to 212 (DPKKRAVINQ…MKALFDARKL (127 aa)).

Belongs to the GST superfamily. Delta family. As to quaternary structure, homodimer.

The enzyme catalyses RX + glutathione = an S-substituted glutathione + a halide anion + H(+). In terms of biological role, conjugation of reduced glutathione to a wide number of exogenous and endogenous hydrophobic electrophiles. May be involved in detoxification. The protein is Glutathione S-transferase D2 of Drosophila melanogaster (Fruit fly).